Here is a 79-residue protein sequence, read N- to C-terminus: Protein FAM236C (79 aa).

The segment at 19–48 (KGPQKDPEELVAVSDTAEDPSSGTGLPREP) is disordered.

The protein belongs to the FAM236 family.

The chain is Protein FAM236C from Homo sapiens (Human).